Consider the following 179-residue polypeptide: ATP synthase subunit delta (179 aa).

Belongs to the ATPase delta chain family. As to quaternary structure, F-type ATPases have 2 components, F(1) - the catalytic core - and F(0) - the membrane proton channel. F(1) has five subunits: alpha(3), beta(3), gamma(1), delta(1), epsilon(1). F(0) has three main subunits: a(1), b(2) and c(10-14). The alpha and beta chains form an alternating ring which encloses part of the gamma chain. F(1) is attached to F(0) by a central stalk formed by the gamma and epsilon chains, while a peripheral stalk is formed by the delta and b chains.

The protein resides in the cell inner membrane. Its function is as follows. F(1)F(0) ATP synthase produces ATP from ADP in the presence of a proton or sodium gradient. F-type ATPases consist of two structural domains, F(1) containing the extramembraneous catalytic core and F(0) containing the membrane proton channel, linked together by a central stalk and a peripheral stalk. During catalysis, ATP synthesis in the catalytic domain of F(1) is coupled via a rotary mechanism of the central stalk subunits to proton translocation. In terms of biological role, this protein is part of the stalk that links CF(0) to CF(1). It either transmits conformational changes from CF(0) to CF(1) or is implicated in proton conduction. The polypeptide is ATP synthase subunit delta (Acidithiobacillus ferrooxidans (strain ATCC 23270 / DSM 14882 / CIP 104768 / NCIMB 8455) (Ferrobacillus ferrooxidans (strain ATCC 23270))).